The sequence spans 661 residues: UvrABC system protein C (661 aa).

One can recognise a GIY-YIG domain in the interval 25–104; that stretch reads AEPGCYLMRD…IKNHQPHFNV (80 aa). The UVR domain occupies 214-249; it reads DELQHLLQEQMERYAERMDYESAARVRDQLQGLDQL. Basic and acidic residues predominate over residues 636-652; the sequence is FFHPSDEGTDADARAAL. A disordered region spans residues 636-661; it reads FFHPSDEGTDADARAALEEQPQELSA.

This sequence belongs to the UvrC family. As to quaternary structure, interacts with UvrB in an incision complex.

It is found in the cytoplasm. The UvrABC repair system catalyzes the recognition and processing of DNA lesions. UvrC both incises the 5' and 3' sides of the lesion. The N-terminal half is responsible for the 3' incision and the C-terminal half is responsible for the 5' incision. The sequence is that of UvrABC system protein C from Synechococcus sp. (strain CC9605).